A 442-amino-acid chain; its full sequence is MHIGQALDLVSRYDSLRNPLTSLGDYLDPELISRCLAESGTVTLRKRRLPLEMMVWCIVGMALERKEPLHQIVNRLDIMLPGNRPFVAPSAVIQARQRLGSEAVRRVFTKTAQLWHNATPHPHWCGLTLLAIDGVFWRTPDTPENDAAFPRQTHAGNPALYPQVKMVCQMELTSHLLTAAAFGTMKNSENELAEQLIEQTGDNTLTLMDKGYYSLGLLNAWSLAGEHRHWMIPLRKGAQYEEIRKLGKGDHLVKLKTSPQARKKWPGLGNEVTARLLTVTRKGKVCHLLTSMTDAMRFPGGEMGDLYSHRWEIELGYREIKQTMQRSRLTLRSKKPELVEQELWGVLLAYNLVRYQMIKMAEHLKGYWPNQLSFSESCGMVMRMLMTLQGASPGRIPELMRDLASMGQLVKLPTRRERAFPRVVKERPWKYPTAPKKSQSVA.

The protein belongs to the transposase 11 family.

Involved in the transposition of the insertion sequence IS4. The protein is Transposase InsG for insertion sequence element IS4 (insG) of Escherichia coli (strain K12).